The primary structure comprises 65 residues: Weak neurotoxin 7 (65 aa).

5 disulfides stabilise this stretch: C3–C24, C6–C11, C17–C42, C46–C57, and C58–C63.

This sequence belongs to the three-finger toxin family. Ancestral subfamily. Orphan group II sub-subfamily. In terms of tissue distribution, expressed by the venom gland.

It localises to the secreted. In terms of biological role, binds with low affinity to muscular (alpha-1-beta-1-delta-epsilon/CHRNA1-CHRNB1-CHRND-CHRNE) and very low affinity to neuronal (alpha-7/CHRNA7) nicotinic acetylcholine receptor (nAChR). This chain is Weak neurotoxin 7, found in Naja naja (Indian cobra).